A 120-amino-acid polypeptide reads, in one-letter code: MKRTGPTDPNLRRLIRYLRKKSNEYGVKIWKDVAWRLERPRRQRAEVNVSKINRYANDGEMIVVPGSVLGAGKLEKKVIVAAWKFSETARRKIIEAGGEAITIEELIERNPTGSGVRIME.

Belongs to the eukaryotic ribosomal protein eL18 family. Part of the 50S ribosomal subunit.

The sequence is that of Large ribosomal subunit protein eL18 from Pyrococcus furiosus (strain ATCC 43587 / DSM 3638 / JCM 8422 / Vc1).